A 147-amino-acid chain; its full sequence is Nucleoside diphosphate kinase (147 aa).

The ATP site is built by lysine 9, phenylalanine 57, arginine 85, threonine 91, arginine 102, and asparagine 112. The active-site Pros-phosphohistidine intermediate is the histidine 115.

Belongs to the NDK family. As to quaternary structure, homotetramer. It depends on Mg(2+) as a cofactor.

It localises to the cytoplasm. It catalyses the reaction a 2'-deoxyribonucleoside 5'-diphosphate + ATP = a 2'-deoxyribonucleoside 5'-triphosphate + ADP. It carries out the reaction a ribonucleoside 5'-diphosphate + ATP = a ribonucleoside 5'-triphosphate + ADP. In terms of biological role, major role in the synthesis of nucleoside triphosphates other than ATP. The ATP gamma phosphate is transferred to the NDP beta phosphate via a ping-pong mechanism, using a phosphorylated active-site intermediate. The protein is Nucleoside diphosphate kinase of Thermosipho africanus (strain TCF52B).